A 205-amino-acid chain; its full sequence is Sarcosine oxidase subunit gamma (205 aa).

The protein belongs to the SoxG family. Heterotetramer composed of subunits alpha (SoxA), beta (SoxB), gamma (SoxG) and delta (SoxD).

The protein resides in the cytoplasm. It carries out the reaction sarcosine + (6S)-5,6,7,8-tetrahydrofolate + O2 = (6R)-5,10-methylene-5,6,7,8-tetrahydrofolate + glycine + H2O2. The catalysed reaction is sarcosine + O2 + H2O = formaldehyde + glycine + H2O2. With respect to regulation, inhibited by Zn(2+), Cu(2+), Cd(2+), Hg(2+), Ag(+), p-chloromercuribenzoate (p-CMB), iodoacetamide, N-ethylmaleimide, CN(-), o-phenanthroline and sodium lauryl sulfate. In terms of biological role, in the presence of tetrahydrofolate, catalyzes the oxidative demethylation of sarcosine to yield glycine, 5,10-methylenetetrahydrofolate and hydrogen peroxide. In the absence of tetrahydrofolate, catalyzes the oxidative demethylation of sarcosine to yield glycine, formaldehyde and hydrogen peroxide. Can also use N-methyl-L-alanine and N-ethyl-L-glycine. Is very specific for oxygen as an acceptor. The polypeptide is Sarcosine oxidase subunit gamma (Corynebacterium sp. (strain U-96)).